Here is a 250-residue protein sequence, read N- to C-terminus: Ubiquinone/menaquinone biosynthesis C-methyltransferase UbiE (250 aa).

S-adenosyl-L-methionine contacts are provided by residues Thr73, Asp94, and 122 to 123; that span reads DA.

The protein belongs to the class I-like SAM-binding methyltransferase superfamily. MenG/UbiE family.

It catalyses the reaction a 2-demethylmenaquinol + S-adenosyl-L-methionine = a menaquinol + S-adenosyl-L-homocysteine + H(+). The enzyme catalyses a 2-methoxy-6-(all-trans-polyprenyl)benzene-1,4-diol + S-adenosyl-L-methionine = a 5-methoxy-2-methyl-3-(all-trans-polyprenyl)benzene-1,4-diol + S-adenosyl-L-homocysteine + H(+). Its pathway is quinol/quinone metabolism; menaquinone biosynthesis; menaquinol from 1,4-dihydroxy-2-naphthoate: step 2/2. It functions in the pathway cofactor biosynthesis; ubiquinone biosynthesis. Its function is as follows. Methyltransferase required for the conversion of demethylmenaquinol (DMKH2) to menaquinol (MKH2) and the conversion of 2-polyprenyl-6-methoxy-1,4-benzoquinol (DDMQH2) to 2-polyprenyl-3-methyl-6-methoxy-1,4-benzoquinol (DMQH2). In Coxiella burnetii (strain CbuK_Q154) (Coxiella burnetii (strain Q154)), this protein is Ubiquinone/menaquinone biosynthesis C-methyltransferase UbiE.